The following is a 223-amino-acid chain: Neurotrophic factor BDNF precursor form (223 aa).

An N-terminal signal peptide occupies residues 1–5 (SCMKA). A propeptide spanning residues 6 to 114 (APMKEVSIRG…AANMSMRVRR (109 aa)) is cleaved from the precursor. Asparagine 107 is a glycosylation site (N-linked (GlcNAc...) asparagine). 2 disulfides stabilise this stretch: cysteine 127/cysteine 194 and cysteine 172/cysteine 223.

It belongs to the NGF-beta family.

It localises to the secreted. Functionally, promotes the survival of neuronal populations that are all located either in the central nervous system or directly connected to it. This is Neurotrophic factor BDNF precursor form (BDNF) from Lichanura trivirgata (Rosy boa).